The following is a 341-amino-acid chain: L-threonine 3-dehydrogenase (341 aa).

A Zn(2+)-binding site is contributed by Cys-38. Active-site charge relay system residues include Thr-40 and His-43. Zn(2+) is bound by residues His-63, Glu-64, Cys-93, Cys-96, Cys-99, and Cys-107. NAD(+)-binding positions include Ile-175, Asp-195, Arg-200, 262 to 264 (LGI), and 286 to 287 (IY).

It belongs to the zinc-containing alcohol dehydrogenase family. As to quaternary structure, homotetramer. It depends on Zn(2+) as a cofactor.

The protein resides in the cytoplasm. The enzyme catalyses L-threonine + NAD(+) = (2S)-2-amino-3-oxobutanoate + NADH + H(+). It functions in the pathway amino-acid degradation; L-threonine degradation via oxydo-reductase pathway; glycine from L-threonine: step 1/2. Catalyzes the NAD(+)-dependent oxidation of L-threonine to 2-amino-3-ketobutyrate. In Shigella boydii serotype 4 (strain Sb227), this protein is L-threonine 3-dehydrogenase.